A 69-amino-acid chain; its full sequence is Small, acid-soluble spore protein A (69 aa).

This sequence belongs to the alpha/beta-type SASP family.

SASP are bound to spore DNA. They are double-stranded DNA-binding proteins that cause DNA to change to an a-like conformation. They protect the DNA backbone from chemical and enzymatic cleavage and are thus involved in dormant spore's high resistance to UV light. This chain is Small, acid-soluble spore protein A (sspA), found in Bacillus subtilis (strain 168).